Reading from the N-terminus, the 578-residue chain is ER degradation-enhancing alpha-mannosidase-like protein 2 (578 aa).

Residues M1 to G21 form the signal peptide. N-linked (GlcNAc...) asparagine glycans are attached at residues N90, N112, N289, and N450. Residues K517 to S557 form a disordered region. Basic and acidic residues predominate over residues E538–P548.

It belongs to the glycosyl hydrolase 47 family. In terms of processing, N-glycosylated. Expressed ubiquitously in all tissues tested with slightly higher levels detected in small intestine and peripheral blood leukocytes and weakest levels in brain and skeletal muscle.

Its subcellular location is the endoplasmic reticulum lumen. Involved in the endoplasmic reticulum-associated degradation (ERAD) pathway that targets misfolded glycoproteins for degradation in an N-glycan-dependent manner. May initiate ERAD by promoting the first mannose trimming step of ERAD substrates, from Man9GlcNAc2 to Man8GlcNAc2. Seems to recognize and bind to exposed hydrophobic regions in target proteins. The chain is ER degradation-enhancing alpha-mannosidase-like protein 2 (EDEM2) from Homo sapiens (Human).